Consider the following 355-residue polypeptide: Protein FIP1 (355 aa).

The next 4 helical transmembrane spans lie at Tyr42 to Phe62, Leu72 to Val92, Val113 to Val133, and Ile149 to Val169. A coiled-coil region spans residues Leu220–Glu337. Residues Asn331–Ser340 are compositionally biased toward basic and acidic residues. Residues Asn331 to Pro355 are disordered.

It belongs to the TMEM192 family. As to quaternary structure, interacts with FRI.

It is found in the membrane. In Arabidopsis thaliana (Mouse-ear cress), this protein is Protein FIP1.